We begin with the raw amino-acid sequence, 599 residues long: Elongation factor 4 (599 aa).

The tr-type G domain maps to 5-187 (AHIRNFSIVA…AIVKHLPAPK (183 aa)). GTP-binding positions include 17–22 (DHGKST) and 134–137 (NKID).

It belongs to the TRAFAC class translation factor GTPase superfamily. Classic translation factor GTPase family. LepA subfamily.

It is found in the cell inner membrane. It carries out the reaction GTP + H2O = GDP + phosphate + H(+). Required for accurate and efficient protein synthesis under certain stress conditions. May act as a fidelity factor of the translation reaction, by catalyzing a one-codon backward translocation of tRNAs on improperly translocated ribosomes. Back-translocation proceeds from a post-translocation (POST) complex to a pre-translocation (PRE) complex, thus giving elongation factor G a second chance to translocate the tRNAs correctly. Binds to ribosomes in a GTP-dependent manner. This Ruegeria pomeroyi (strain ATCC 700808 / DSM 15171 / DSS-3) (Silicibacter pomeroyi) protein is Elongation factor 4.